We begin with the raw amino-acid sequence, 274 residues long: NAD kinase (274 aa).

Aspartate 50 functions as the Proton acceptor in the catalytic mechanism. Residues 50–51, 126–127, arginine 152, aspartate 154, 165–170, and alanine 189 contribute to the NAD(+) site; these read DG, NE, and TAYNKS.

The protein belongs to the NAD kinase family. The cofactor is a divalent metal cation.

It is found in the cytoplasm. It catalyses the reaction NAD(+) + ATP = ADP + NADP(+) + H(+). Its function is as follows. Involved in the regulation of the intracellular balance of NAD and NADP, and is a key enzyme in the biosynthesis of NADP. Catalyzes specifically the phosphorylation on 2'-hydroxyl of the adenosine moiety of NAD to yield NADP. The sequence is that of NAD kinase from Streptococcus gordonii (strain Challis / ATCC 35105 / BCRC 15272 / CH1 / DL1 / V288).